Consider the following 433-residue polypeptide: Gamma-glutamyl phosphate reductase (433 aa).

It belongs to the gamma-glutamyl phosphate reductase family.

The protein resides in the cytoplasm. The enzyme catalyses L-glutamate 5-semialdehyde + phosphate + NADP(+) = L-glutamyl 5-phosphate + NADPH + H(+). The protein operates within amino-acid biosynthesis; L-proline biosynthesis; L-glutamate 5-semialdehyde from L-glutamate: step 2/2. In terms of biological role, catalyzes the NADPH-dependent reduction of L-glutamate 5-phosphate into L-glutamate 5-semialdehyde and phosphate. The product spontaneously undergoes cyclization to form 1-pyrroline-5-carboxylate. In Rhodopseudomonas palustris (strain BisB18), this protein is Gamma-glutamyl phosphate reductase.